The sequence spans 255 residues: ATP synthase subunit a 2 (255 aa).

The next 5 helical transmembrane spans lie at 24-44, 86-106, 131-151, 205-225, and 226-246; these read WFGI…VFIL, LIGP…AVDL, DINI…GYTF, MIFI…SVPW, and ALFH…LTVV.

It belongs to the ATPase A chain family. F-type ATPases have 2 components, CF(1) - the catalytic core - and CF(0) - the membrane proton channel. CF(1) has five subunits: alpha(3), beta(3), gamma(1), delta(1), epsilon(1). CF(0) has three main subunits: a(1), b(2) and c(9-12). The alpha and beta chains form an alternating ring which encloses part of the gamma chain. CF(1) is attached to CF(0) by a central stalk formed by the gamma and epsilon chains, while a peripheral stalk is formed by the delta and b chains.

The protein resides in the cell inner membrane. In terms of biological role, key component of the proton channel; it plays a direct role in the translocation of protons across the membrane. In Vibrio campbellii (strain ATCC BAA-1116), this protein is ATP synthase subunit a 2.